Consider the following 178-residue polypeptide: Large ribosomal subunit protein uL6 (178 aa).

Belongs to the universal ribosomal protein uL6 family. In terms of assembly, part of the 50S ribosomal subunit.

In terms of biological role, this protein binds to the 23S rRNA, and is important in its secondary structure. It is located near the subunit interface in the base of the L7/L12 stalk, and near the tRNA binding site of the peptidyltransferase center. The protein is Large ribosomal subunit protein uL6 of Francisella tularensis subsp. tularensis (strain FSC 198).